Reading from the N-terminus, the 1129-residue chain is Protein LANA1 (1129 aa).

Disordered regions lie at residues 1 to 988 (MAPP…PVPY) and 1110 to 1129 (LPLT…QEMT). Composition is skewed to basic and acidic residues over residues 28–41 (RSPE…DLHL) and 48–58 (VADSVDGRECG). Over residues 85–104 (PVAPIPSPAPATPLPPPALL) the composition is skewed to pro residues. A compositionally biased stretch (polar residues) spans 139 to 156 (SPESSQRPPLSSPTGRPD). A compositionally biased stretch (pro residues) spans 161-185 (MRPPPSQQTTPPHSPTTPPPEPPSK). The segment covering 186 to 197 (SSPDSLAPSTLR) has biased composition (low complexity). Residues 207-217 (PQGPSTLNPIC) are compositionally biased toward polar residues. Positions 263 to 275 (PISIGSSSPSEGS) are enriched in low complexity. 2 stretches are compositionally biased toward basic and acidic residues: residues 292–301 (EASKNEKECS) and 314–323 (EISKESQVDK). A compositionally biased stretch (acidic residues) spans 324-419 (DDNDNKDDEE…DKKEDEEDGG (96 aa)). Positions 431 to 471 (QQQQEPQQQEPQQQEPQQQEPQQQEPQQQEPQQQEPQQQEP) are enriched in low complexity. Residues 472–528 (QQREPQQREPQQREPQQREPQQREPQQREPQQREPQQREPQQREPQQREPQQREPQQ) are compositionally biased toward basic and acidic residues. Residues 529-596 (REPQQQEPQQ…QQQEPQQQDE (68 aa)) are compositionally biased toward low complexity. Residues 597–888 (QQQDEQQQDE…QELEEVEEQE (292 aa)) show a composition bias toward acidic residues. A compositionally biased stretch (polar residues) spans 924 to 934 (THEQIASSPPG). Over residues 962 to 979 (PGVRMRRVPVTHPKKPHP) the composition is skewed to basic residues. The DNA-binding domain stretch occupies residues 1008–1129 (FLGKDGRRDP…GPGDSPQEMT (122 aa)).

As to quaternary structure, homooligomer. Interacts with host BRD2. Interacts with host RELA, ELOB, ELOC and CUL5; these interactions induce the proteasomal degradation of host RELA. Interacts with host TRIM28 and NFE2L2/NRF2; these interactions are essential for the shutdown of lytic gene expression during the early stage of infection. Interacts (via N-terminus) with host histones H2A and H2B; these interactions are essential to dock LANA1 onto chromosomes. Interacts with host BUB1 and PCNA. Interacts with host NAP1L1; this interaction is required for LANA1-dependent DNA replication. Interacts with components of the host MLL1 complex KMT2A and WDR5.

It localises to the host nucleus. In terms of biological role, multifunctional protein that plays a role in the replication and long-term persistence of the viral episomal genome in dividing cells. Binds to mitotic chromosomes via its N-terminal region and to a 16-bp imperfect palindrome within the origin of replication (oriP) located in the viral terminal repeat (TR) through its C-terminal. Tethers viral episomes to chromosomes during mitosis. Plays a critical role in the shutdown of lytic gene expression during the early stage of infection by interacting with host TRIM28. Also plays a role in the repression of host NF-kappa-B activity upon TNF-alpha stimulation by promoting the proteasomal degradation of host RELA. Promotes nuclear localization and cleavage of host STAT6 leading to constitutive activation of the IL13/STAT6 signaling pathway to promote viral latency. Interacts with and modulates the histone methyltransferase MLL1 complex activity, leading to its recruitment on viral DNA terminal repeats changing the dynamic of histone H3 methylated 'Lys-4'(H3K4me) profile during the initial hours following infection. This is Protein LANA1 (LANA1) from Homo sapiens (Human).